A 339-amino-acid chain; its full sequence is MVREEVAGSTQTLQWKCVESRVDSKRLYYGRFILSPLRKGQADTVGIALRRALLGEIEGTCITRAKFGSVPHEYSTIAGIEESVQEILLNLKEIVLRSNLYGVRDASICVKGPRYITAQDIILPPSVEIVDRAQPIANLTEPIDFCIDLQIKRDRGYQTELRKNYQDGSYPIDAVSMPVRNVNYSIFSCGNGNEKHEILFLEIWTNGSLTPKEALYEASRNLIDLFLPFLHAEEEGTSFEENKNRFTPPLFTFQKRLTNLKKNKKGIPLNCIFIDQLELTSRTYNCLKRANIHTLLDLLSKTEEDLLRIDSFRMEDRKHIWDTLEKHLPIDLLKNKLSF.

The tract at residues Met-1–Glu-233 is alpha N-terminal domain (alpha-NTD). The tract at residues Lys-264–Phe-339 is alpha C-terminal domain (alpha-CTD).

The protein belongs to the RNA polymerase alpha chain family. As to quaternary structure, in plastids the minimal PEP RNA polymerase catalytic core is composed of four subunits: alpha, beta, beta', and beta''. When a (nuclear-encoded) sigma factor is associated with the core the holoenzyme is formed, which can initiate transcription.

The protein resides in the plastid. It localises to the chloroplast. It carries out the reaction RNA(n) + a ribonucleoside 5'-triphosphate = RNA(n+1) + diphosphate. Functionally, DNA-dependent RNA polymerase catalyzes the transcription of DNA into RNA using the four ribonucleoside triphosphates as substrates. This chain is DNA-directed RNA polymerase subunit alpha, found in Agropyron cristatum (Crested wheatgrass).